A 188-amino-acid chain; its full sequence is Photosystem I assembly protein Ycf4 (188 aa).

The next 2 helical transmembrane spans lie at 28–48 (WATV…SSYL) and 68–88 (IAIG…WATI).

Belongs to the Ycf4 family.

The protein localises to the cellular thylakoid membrane. Its function is as follows. Seems to be required for the assembly of the photosystem I complex. This Cyanothece sp. (strain PCC 7425 / ATCC 29141) protein is Photosystem I assembly protein Ycf4.